Here is an 84-residue protein sequence, read N- to C-terminus: MSQSETFEKVKKIVIEQLSVENPDTVTPEASFANDLQADSLDTVELVMALEEEFDIEIPDEAAEKITTVQEAVDYINNQVAASA.

A Carrier domain is found at 4–80 (SETFEKVKKI…EAVDYINNQV (77 aa)). S40 carries the O-(pantetheine 4'-phosphoryl)serine modification.

This sequence belongs to the acyl carrier protein (ACP) family. Post-translationally, 4'-phosphopantetheine is transferred from CoA to a specific serine of apo-ACP by AcpS. This modification is essential for activity because fatty acids are bound in thioester linkage to the sulfhydryl of the prosthetic group.

The protein localises to the cytoplasm. The protein operates within lipid metabolism; fatty acid biosynthesis. Functionally, carrier of the growing fatty acid chain in fatty acid biosynthesis. This is Acyl carrier protein from Nostoc sp. (strain PCC 7120 / SAG 25.82 / UTEX 2576).